A 197-amino-acid chain; its full sequence is Orotate phosphoribosyltransferase (197 aa).

5-phospho-alpha-D-ribose 1-diphosphate is bound by residues Arg-87, Lys-91, His-93, and 112–120 (DDVATTGGS). Orotate-binding residues include Thr-116 and Arg-144.

Belongs to the purine/pyrimidine phosphoribosyltransferase family. PyrE subfamily. In terms of assembly, homodimer. Mg(2+) is required as a cofactor.

The enzyme catalyses orotidine 5'-phosphate + diphosphate = orotate + 5-phospho-alpha-D-ribose 1-diphosphate. It functions in the pathway pyrimidine metabolism; UMP biosynthesis via de novo pathway; UMP from orotate: step 1/2. Functionally, catalyzes the transfer of a ribosyl phosphate group from 5-phosphoribose 1-diphosphate to orotate, leading to the formation of orotidine monophosphate (OMP). In Sulfolobus acidocaldarius (strain ATCC 33909 / DSM 639 / JCM 8929 / NBRC 15157 / NCIMB 11770), this protein is Orotate phosphoribosyltransferase.